The sequence spans 126 residues: Protein HEAT-INDUCED TAS1 TARGET 3 (126 aa).

Belongs to the heat induced plant HTT protein family. As to expression, expressed in seedlings, leaves, stems, inflorescences and siliques.

It localises to the cytoplasm. The protein localises to the nucleus. Mediates both basal and acquired thermotolerance. This is Protein HEAT-INDUCED TAS1 TARGET 3 from Arabidopsis thaliana (Mouse-ear cress).